Consider the following 338-residue polypeptide: Glycerol-3-phosphate dehydrogenase [NAD(P)+] (338 aa).

Residues S13, W14, and K108 each coordinate NADPH. Residues K108, G139, and S141 each coordinate sn-glycerol 3-phosphate. A143 contacts NADPH. Sn-glycerol 3-phosphate is bound by residues K194, D247, S257, R258, and N259. K194 serves as the catalytic Proton acceptor. R258 is a binding site for NADPH. Residues V282 and E284 each contribute to the NADPH site.

It belongs to the NAD-dependent glycerol-3-phosphate dehydrogenase family.

Its subcellular location is the cytoplasm. The catalysed reaction is sn-glycerol 3-phosphate + NAD(+) = dihydroxyacetone phosphate + NADH + H(+). The enzyme catalyses sn-glycerol 3-phosphate + NADP(+) = dihydroxyacetone phosphate + NADPH + H(+). The protein operates within membrane lipid metabolism; glycerophospholipid metabolism. Functionally, catalyzes the reduction of the glycolytic intermediate dihydroxyacetone phosphate (DHAP) to sn-glycerol 3-phosphate (G3P), the key precursor for phospholipid synthesis. The chain is Glycerol-3-phosphate dehydrogenase [NAD(P)+] from Streptococcus pneumoniae (strain P1031).